Reading from the N-terminus, the 1748-residue chain is MALLNVISENPLTLQPGQVIAFDHLANGEHWQWALGTVVSSDKHVVVVEQWAVNEGSCETLKHNISSEIQKEMKRMGVFQEQLSSARDKLAAIRSENEDRVSAARAVFEDAKARVASVDEVHMREVTSQACPSPVAVEVLKCVLALAQNDPTVTNCSTWDDIRMEYRRPNAIADFISADITGKTYPNAEEICSSLNEQRLSSLAASRDSEAISSLHHWVLSALAYQEAYCRLTTDTRVQEQNDAIANCIAGMKGCRLKVMKLKEELERGGTPTFGGQLTSFTKTSVQLKAPLSSVISIVGVDPSAQDCVLTDDEVGLILDKAEQTRLQINDHFSHLSNSYMEAMAELHCLSMYTSELEERRLNLQERFVFSLFTNAGKTNAPRRERIETDVGLRSVEAPRGDSANNIKDLQEIIKELSSHDERWMYRNEPTVTTKHRKSYPGREWSKVVERKPEELLSTFRTEQAAACHVPEDAIRNIEFTATSEKLQVSFDVQHPVKQTAAEINKRLQEFPSRGMDRMLCDVDQPKKGLDRAIVEVCRAFDLREHAFRGMTFDKFIEEVAMKGRVGDKDAYESEIGDLLMLLDKIHNENRSLQYTLEKSAEEFRRQTASTMREQESLRQRNGELHAEIGRLRDLVEKLRDLADNQASELELLKLQKTQANQIRAQRNLSTFRGDDTAEPVYCVTLDELREQTEHCDQVERELERQREQCQNLLNAQDDLLAELSGVSEEKEKLEAECERLEAELRQMEEKSRLSEQGLSEMTQRLEEKQAEIEGLLENLEQLDEQLEALRAAEKSAQAHIEARDREISDLQQRLEGEIDDHIKTTALLEELRKHYNNLEELFDKQEAELMAYREKRQNAHKVRSLEPTLRPIGTQTKPFQEVVSADEISSEPLLSVTLDEYNDHMHRSNQFQQENDLLRQQLQQANDERENLHDRLEQLMAENQSLSEQLHNMHEELEREERDRSGVTLQNERLAEEIQRKTAENEQLVLENNKSRSDIRNLNVQVQRLMEELELKAAENEKLAEELELKAAENEKLAEELELKAAENEKLAEALDLKAAENEKLAEELELKVAENEKLAEELELKVAENEKLAEELELKAAENEKLAEELELKAAENEKLAEELELKAAENEKLAEELELKAAENEKLAEALDLKAAENEKLAEELDLKAAENEKLAEELELKVAENEKLAEELELKAAENEKLAEELELKAAENEKLAEELELKAAENEKLAEELELKVAENEKLAEELELKAAENEKLAEELELKAAENEKLAEELELKAAENEKLAEELELKVAENEKLAEELELKAAENEKLAEELELKAAENEKLAEELELKAAENEKLAEELELKAAENEKLAEELELKAAENEKLAEELELKAAENEKLAEELELKAAENEKLAEELELKAAENEKLAEELELKAAENEKLAEELELKAAENEKLAEELELKAAENEKLAEELELKAAENEKLAEELELKAAENEKLAEELELKAAENEKLAEELELKAAENEKLAEELELKAAENEKLAEELELKAAENEKLAEELELKVAENEKLAEELELKVAENEKLAEELELKVAENKRLAEEVTQRLSEKELLAEDTSARLLEADSANSALQCKVKHLEEKLTLLSSEKETALATLEAEIVDLLTQLKGLNGTNSALESLCASKEKELVFLREHCELWTDPTTKKEKVITRHVKVFDGNEWMKLITDRPEALMSAFVIDAGNACHVPGDQIHEVSFLNNKEKH.

Coiled coils occupy residues 613 to 657, 684 to 864, and 903 to 1663; these read REQE…KLQK, VTLD…HKVR, and NDHM…SALE. Tandem repeats lie at residues 1012–1025, 1026–1039, 1040–1053, 1054–1067, 1068–1081, 1082–1095, 1096–1109, 1110–1123, 1124–1137, 1138–1151, 1152–1165, 1166–1179, 1180–1193, 1194–1207, 1208–1221, 1222–1235, 1236–1249, 1250–1263, 1264–1277, 1278–1291, 1292–1305, 1306–1319, 1320–1333, 1334–1347, 1348–1361, 1362–1375, 1376–1389, 1390–1403, 1404–1417, 1418–1431, 1432–1445, 1446–1459, 1460–1473, 1474–1487, 1488–1501, 1502–1515, 1516–1529, 1530–1543, 1544–1557, 1558–1571, and 1572–1585. The segment at 1012 to 1529 is 41 X 14 AA tandem repeats of E-E-L-E-L-K-[VA]-A-E-N-E-K-L-A; sequence EELELKAAEN…LKAAENEKLA (518 aa).

The protein resides in the cell projection. It is found in the cilium. The protein localises to the flagellum. Its function is as follows. A component of FAZ filament that is required for correct FAZ assembly and attachment. Not essential for new flagellum growth. This chain is Flagellar attachment zone protein 1, found in Trypanosoma brucei gambiense (strain MHOM/CI/86/DAL972).